A 182-amino-acid polypeptide reads, in one-letter code: Isopentenyl-diphosphate Delta-isomerase (182 aa).

Mn(2+) is bound by residues histidine 25 and histidine 32. Positions 30 to 164 constitute a Nudix hydrolase domain; sequence RLHLAFSSWL…PWAFSPWMVM (135 aa). Residue cysteine 67 is part of the active site. Cysteine 67 contributes to the Mg(2+) binding site. Histidine 69 is a Mn(2+) binding site. Glutamate 87 is a binding site for Mg(2+). The Mn(2+) site is built by glutamate 114 and glutamate 116. The active site involves glutamate 116.

The protein belongs to the IPP isomerase type 1 family. In terms of assembly, homodimer. The cofactor is Mg(2+). Requires Mn(2+) as cofactor.

The protein resides in the cytoplasm. It catalyses the reaction isopentenyl diphosphate = dimethylallyl diphosphate. Its pathway is isoprenoid biosynthesis; dimethylallyl diphosphate biosynthesis; dimethylallyl diphosphate from isopentenyl diphosphate: step 1/1. Catalyzes the 1,3-allylic rearrangement of the homoallylic substrate isopentenyl (IPP) to its highly electrophilic allylic isomer, dimethylallyl diphosphate (DMAPP). The protein is Isopentenyl-diphosphate Delta-isomerase of Shigella dysenteriae serotype 1 (strain Sd197).